The sequence spans 257 residues: Small ribosomal subunit protein uS3 (257 aa).

Positions 39–112 constitute a KH type-2 domain; it reads IRKFLNKKYN…EIVFNVVEVR (74 aa). Residues 217–257 form a disordered region; it reads HEELRKERQSSASSNHGGGKRRPSRKGPRRSQEDAATEGGN. Residues 234 to 245 are compositionally biased toward basic residues; it reads GGKRRPSRKGPR.

It belongs to the universal ribosomal protein uS3 family. Part of the 30S ribosomal subunit. Forms a tight complex with proteins S10 and S14.

Its function is as follows. Binds the lower part of the 30S subunit head. Binds mRNA in the 70S ribosome, positioning it for translation. This is Small ribosomal subunit protein uS3 from Haploplasma axanthum (Acholeplasma axanthum).